Reading from the N-terminus, the 193-residue chain is Thymidine kinase (193 aa).

ATP contacts are provided by residues 16-23 and 89-92; these read GPMFSGKS and DEIQ. Catalysis depends on glutamate 90, which acts as the Proton acceptor. Zn(2+) is bound by residues cysteine 146, cysteine 149, cysteine 184, and cysteine 187.

Belongs to the thymidine kinase family. As to quaternary structure, homotetramer.

Its subcellular location is the cytoplasm. It carries out the reaction thymidine + ATP = dTMP + ADP + H(+). The polypeptide is Thymidine kinase (Thermoanaerobacter pseudethanolicus (strain ATCC 33223 / 39E) (Clostridium thermohydrosulfuricum)).